A 247-amino-acid polypeptide reads, in one-letter code: Segregation and condensation protein A (247 aa).

This sequence belongs to the ScpA family. In terms of assembly, component of a cohesin-like complex composed of ScpA, ScpB and the Smc homodimer, in which ScpA and ScpB bind to the head domain of Smc. The presence of the three proteins is required for the association of the complex with DNA.

The protein localises to the cytoplasm. Functionally, participates in chromosomal partition during cell division. May act via the formation of a condensin-like complex containing Smc and ScpB that pull DNA away from mid-cell into both cell halves. The chain is Segregation and condensation protein A from Mycoplasma mobile (strain ATCC 43663 / 163K / NCTC 11711) (Mesomycoplasma mobile).